The sequence spans 387 residues: Eukaryotic translation initiation factor 3 subunit M (387 aa).

In terms of domain architecture, PCI spans 181–340; the sequence is LSSKVMIELL…RKVHISSTMH (160 aa).

Belongs to the eIF-3 subunit M family. As to quaternary structure, component of the eukaryotic translation initiation factor 3 (eIF-3) complex. The eIF-3 complex interacts with pix.

Its subcellular location is the cytoplasm. It is found in the golgi apparatus. Component of the eukaryotic translation initiation factor 3 (eIF-3) complex, which is involved in protein synthesis of a specialized repertoire of mRNAs and, together with other initiation factors, stimulates binding of mRNA and methionyl-tRNAi to the 40S ribosome. The eIF-3 complex specifically targets and initiates translation of a subset of mRNAs involved in cell proliferation. The chain is Eukaryotic translation initiation factor 3 subunit M from Drosophila pseudoobscura pseudoobscura (Fruit fly).